Reading from the N-terminus, the 493-residue chain is Probable cytosol aminopeptidase (493 aa).

Mn(2+) is bound by residues Lys260 and Asp265. Lys272 is an active-site residue. The Mn(2+) site is built by Asp284, Asp343, and Glu345. Residue Arg347 is part of the active site.

It belongs to the peptidase M17 family. The cofactor is Mn(2+).

It localises to the cytoplasm. It carries out the reaction Release of an N-terminal amino acid, Xaa-|-Yaa-, in which Xaa is preferably Leu, but may be other amino acids including Pro although not Arg or Lys, and Yaa may be Pro. Amino acid amides and methyl esters are also readily hydrolyzed, but rates on arylamides are exceedingly low.. It catalyses the reaction Release of an N-terminal amino acid, preferentially leucine, but not glutamic or aspartic acids.. Its function is as follows. Presumably involved in the processing and regular turnover of intracellular proteins. Catalyzes the removal of unsubstituted N-terminal amino acids from various peptides. The sequence is that of Probable cytosol aminopeptidase from Nostoc punctiforme (strain ATCC 29133 / PCC 73102).